The following is a 521-amino-acid chain: Glucose-6-phosphate isomerase (521 aa).

The Proton donor role is filled by E327. Catalysis depends on residues H358 and K486.

This sequence belongs to the GPI family.

It localises to the cytoplasm. The enzyme catalyses alpha-D-glucose 6-phosphate = beta-D-fructose 6-phosphate. Its pathway is carbohydrate biosynthesis; gluconeogenesis. It functions in the pathway carbohydrate degradation; glycolysis; D-glyceraldehyde 3-phosphate and glycerone phosphate from D-glucose: step 2/4. Functionally, catalyzes the reversible isomerization of glucose-6-phosphate to fructose-6-phosphate. The protein is Glucose-6-phosphate isomerase of Bordetella bronchiseptica (strain ATCC BAA-588 / NCTC 13252 / RB50) (Alcaligenes bronchisepticus).